Reading from the N-terminus, the 240-residue chain is 1-(5-phosphoribosyl)-5-[(5-phosphoribosylamino)methylideneamino] imidazole-4-carboxamide isomerase (240 aa).

Aspartate 10 functions as the Proton acceptor in the catalytic mechanism. Aspartate 131 serves as the catalytic Proton donor.

This sequence belongs to the HisA/HisF family.

It is found in the cytoplasm. It catalyses the reaction 1-(5-phospho-beta-D-ribosyl)-5-[(5-phospho-beta-D-ribosylamino)methylideneamino]imidazole-4-carboxamide = 5-[(5-phospho-1-deoxy-D-ribulos-1-ylimino)methylamino]-1-(5-phospho-beta-D-ribosyl)imidazole-4-carboxamide. It functions in the pathway amino-acid biosynthesis; L-histidine biosynthesis; L-histidine from 5-phospho-alpha-D-ribose 1-diphosphate: step 4/9. This chain is 1-(5-phosphoribosyl)-5-[(5-phosphoribosylamino)methylideneamino] imidazole-4-carboxamide isomerase, found in Shouchella clausii (strain KSM-K16) (Alkalihalobacillus clausii).